The following is a 79-amino-acid chain: Sulfur carrier protein TusA (79 aa).

Catalysis depends on cysteine 17, which acts as the Cysteine persulfide intermediate.

Belongs to the sulfur carrier protein TusA family.

The protein localises to the cytoplasm. Functionally, sulfur carrier protein which probably makes part of a sulfur-relay system. In Actinobacillus pleuropneumoniae serotype 5b (strain L20), this protein is Sulfur carrier protein TusA.